The chain runs to 225 residues: Protein-L-isoaspartate O-methyltransferase (225 aa).

Ser75 is an active-site residue.

Belongs to the methyltransferase superfamily. L-isoaspartyl/D-aspartyl protein methyltransferase family.

It is found in the cytoplasm. The catalysed reaction is [protein]-L-isoaspartate + S-adenosyl-L-methionine = [protein]-L-isoaspartate alpha-methyl ester + S-adenosyl-L-homocysteine. In terms of biological role, catalyzes the methyl esterification of L-isoaspartyl residues in peptides and proteins that result from spontaneous decomposition of normal L-aspartyl and L-asparaginyl residues. It plays a role in the repair and/or degradation of damaged proteins. In Xanthomonas euvesicatoria pv. vesicatoria (strain 85-10) (Xanthomonas campestris pv. vesicatoria), this protein is Protein-L-isoaspartate O-methyltransferase.